A 144-amino-acid chain; its full sequence is Snake venom vascular endothelial growth factor toxin VR-1 (144 aa).

An N-terminal signal peptide occupies residues 1–24 (MAAYLLAVAILFCIQGWPSGTVQG). Q25 carries the post-translational modification Pyrrolidone carboxylic acid. 3 cysteine pairs are disulfide-bonded: C38-C80, C69-C115, and C73-C117. Residues 120 to 134 (RWKQGEPEGPKEPRR) are compositionally biased toward basic and acidic residues. The disordered stretch occupies residues 120 to 144 (RWKQGEPEGPKEPRRGGVRAKFPFD). A propeptide spanning residues 134-144 (RGGVRAKFPFD) is cleaved from the precursor.

The protein belongs to the PDGF/VEGF growth factor family. Snake venom VEGF subfamily. In terms of assembly, homodimer; disulfide-linked. Interacts with VEGF receptor-2 (KDR) with high affinity, but not with VEGF receptor-1 (Flt-1), VEGF receptor-3 (FLT4), and neuropilin-1 (NRP1). As to expression, expressed by the venom gland.

The protein resides in the secreted. Its function is as follows. Snake venom VEGFs may contribute to venom dispersion and prey subjugation by inducing vascular permeability and hypotension. This protein induces angiogenesis probably through VEGF receptor (KDR/VEGFR-2) signaling, as well as drastic hypotension. The hypotension is mediated by nitric oxide, which is produced by VEGF-activated endothelium NO synthase. May also induce vascular permeability. This chain is Snake venom vascular endothelial growth factor toxin VR-1, found in Daboia russelii (Russel's viper).